The following is a 931-amino-acid chain: Chitin synthase III (931 aa).

Residues Asn-37 and Asn-94 are each glycosylated (N-linked (GlcNAc...) asparagine). Residues 93–154 (PNASQLPPAG…PGGVGQAGGL (62 aa)) form a disordered region. Positions 102–122 (GSGGFGDNGFGQYGQPQGFGG) are enriched in gly residues. Asn-558 carries an N-linked (GlcNAc...) asparagine glycan. 5 helical membrane-spanning segments follow: residues 585 to 605 (FFLHIQVIYNVLNVIFSWFSL), 644 to 664 (IINALLKYLYLAFVILQFILA), 677 to 697 (IASFMVFGLIQGYILVLSGYL), 731 to 751 (VILIALITIYGLYFVASFLYL), and 759 to 779 (SFPYYMLLMSTYINILMVYAF). Residue Asn-802 is glycosylated (N-linked (GlcNAc...) asparagine). 2 consecutive transmembrane segments (helical) span residues 858 to 878 (TGLVVSWLFSNILLVVIITSD) and 899 to 919 (FLLYATAALSIVRFIGFLWFL).

This sequence belongs to the chitin synthase family. Class III subfamily. In terms of tissue distribution, highly expressed in conidia and during appressorium formation.

The protein localises to the cell membrane. The enzyme catalyses [(1-&gt;4)-N-acetyl-beta-D-glucosaminyl](n) + UDP-N-acetyl-alpha-D-glucosamine = [(1-&gt;4)-N-acetyl-beta-D-glucosaminyl](n+1) + UDP + H(+). In terms of biological role, polymerizes chitin, a structural polymer of the cell wall and septum, by transferring the sugar moiety of UDP-GlcNAc to the non-reducing end of the growing chitin polymer. Contributes to the production of conidia and the ability of fungal conidia to germinate. Involved in the fungal cell wall integrity and the ability of conidia to withstand biophysical pressure. Required for appressorium formation and evasion of insect cellular and/or humoral defenses, promoting the fungal dimorphic transition to the production of hyphal bodies that occurs within hosts, and ultimately to virulence. The chain is Chitin synthase III from Metarhizium acridum (strain CQMa 102).